A 499-amino-acid polypeptide reads, in one-letter code: Glycerol kinase (499 aa).

Thr13 lines the ADP pocket. ATP-binding residues include Thr13, Thr14, and Ser15. Thr13 contributes to the sn-glycerol 3-phosphate binding site. Arg17 provides a ligand contact to ADP. Sn-glycerol 3-phosphate is bound by residues Arg83, Glu84, Tyr135, and Asp245. Glycerol contacts are provided by Arg83, Glu84, Tyr135, Asp245, and Gln246. Residues Thr267 and Gly310 each contribute to the ADP site. Residues Thr267, Gly310, Gln314, and Gly411 each coordinate ATP. The ADP site is built by Gly411 and Asn415.

It belongs to the FGGY kinase family.

The catalysed reaction is glycerol + ATP = sn-glycerol 3-phosphate + ADP + H(+). The protein operates within polyol metabolism; glycerol degradation via glycerol kinase pathway; sn-glycerol 3-phosphate from glycerol: step 1/1. Its activity is regulated as follows. Inhibited by fructose 1,6-bisphosphate (FBP). In terms of biological role, key enzyme in the regulation of glycerol uptake and metabolism. Catalyzes the phosphorylation of glycerol to yield sn-glycerol 3-phosphate. The chain is Glycerol kinase from Xanthomonas campestris pv. campestris (strain ATCC 33913 / DSM 3586 / NCPPB 528 / LMG 568 / P 25).